The chain runs to 437 residues: RING finger protein 150 (437 aa).

Residues M1–A34 form the signal peptide. At E35–S207 the chain is on the extracellular side. Residues N45, N124, N152, and N185 are each glycosylated (N-linked (GlcNAc...) asparagine). The 103-residue stretch at S80–L182 folds into the PA domain. A helical transmembrane segment spans residues V208–F228. Residues Y229–S437 are Cytoplasmic-facing. The segment at C277–K318 adopts an RING-type; atypical zinc-finger fold.

It localises to the membrane. The protein is RING finger protein 150 (Rnf150) of Mus musculus (Mouse).